Here is a 262-residue protein sequence, read N- to C-terminus: Ribosomal RNA small subunit methyltransferase A (262 aa).

Residues Asn14, Leu16, Gly41, Glu62, Asp87, and Asn109 each coordinate S-adenosyl-L-methionine.

Belongs to the class I-like SAM-binding methyltransferase superfamily. rRNA adenine N(6)-methyltransferase family. RsmA subfamily.

Its subcellular location is the cytoplasm. The enzyme catalyses adenosine(1518)/adenosine(1519) in 16S rRNA + 4 S-adenosyl-L-methionine = N(6)-dimethyladenosine(1518)/N(6)-dimethyladenosine(1519) in 16S rRNA + 4 S-adenosyl-L-homocysteine + 4 H(+). Specifically dimethylates two adjacent adenosines (A1518 and A1519) in the loop of a conserved hairpin near the 3'-end of 16S rRNA in the 30S particle. May play a critical role in biogenesis of 30S subunits. The polypeptide is Ribosomal RNA small subunit methyltransferase A (Francisella tularensis subsp. holarctica (strain FTNF002-00 / FTA)).